The chain runs to 289 residues: Bifunctional protein FolD (289 aa).

NADP(+)-binding positions include 165-167 (GAS) and Ser190.

It belongs to the tetrahydrofolate dehydrogenase/cyclohydrolase family. In terms of assembly, homodimer.

It catalyses the reaction (6R)-5,10-methylene-5,6,7,8-tetrahydrofolate + NADP(+) = (6R)-5,10-methenyltetrahydrofolate + NADPH. It carries out the reaction (6R)-5,10-methenyltetrahydrofolate + H2O = (6R)-10-formyltetrahydrofolate + H(+). It functions in the pathway one-carbon metabolism; tetrahydrofolate interconversion. Its function is as follows. Catalyzes the oxidation of 5,10-methylenetetrahydrofolate to 5,10-methenyltetrahydrofolate and then the hydrolysis of 5,10-methenyltetrahydrofolate to 10-formyltetrahydrofolate. The sequence is that of Bifunctional protein FolD from Ralstonia pickettii (strain 12J).